Here is a 430-residue protein sequence, read N- to C-terminus: Serine--tRNA ligase (430 aa).

Residue 231–233 coordinates L-serine; sequence TSE. Residue 262-264 participates in ATP binding; that stretch reads RSE. Residue E285 participates in L-serine binding. Residue 349 to 352 participates in ATP binding; it reads EISS. L-serine is bound at residue S385.

The protein belongs to the class-II aminoacyl-tRNA synthetase family. Type-1 seryl-tRNA synthetase subfamily. Homodimer. The tRNA molecule binds across the dimer.

The protein localises to the cytoplasm. It carries out the reaction tRNA(Ser) + L-serine + ATP = L-seryl-tRNA(Ser) + AMP + diphosphate + H(+). The enzyme catalyses tRNA(Sec) + L-serine + ATP = L-seryl-tRNA(Sec) + AMP + diphosphate + H(+). It participates in aminoacyl-tRNA biosynthesis; selenocysteinyl-tRNA(Sec) biosynthesis; L-seryl-tRNA(Sec) from L-serine and tRNA(Sec): step 1/1. Functionally, catalyzes the attachment of serine to tRNA(Ser). Is also able to aminoacylate tRNA(Sec) with serine, to form the misacylated tRNA L-seryl-tRNA(Sec), which will be further converted into selenocysteinyl-tRNA(Sec). In Roseobacter denitrificans (strain ATCC 33942 / OCh 114) (Erythrobacter sp. (strain OCh 114)), this protein is Serine--tRNA ligase.